A 70-amino-acid polypeptide reads, in one-letter code: ATP synthase subunit c (70 aa).

Transmembrane regions (helical) follow at residues 3 to 23 and 44 to 64; these read ALAA…IGIA and LFLI…VIAF.

Belongs to the ATPase C chain family. As to quaternary structure, F-type ATPases have 2 components, F(1) - the catalytic core - and F(0) - the membrane proton channel. F(1) has five subunits: alpha(3), beta(3), gamma(1), delta(1), epsilon(1). F(0) has three main subunits: a(1), b(2) and c(10-14). The alpha and beta chains form an alternating ring which encloses part of the gamma chain. F(1) is attached to F(0) by a central stalk formed by the gamma and epsilon chains, while a peripheral stalk is formed by the delta and b chains.

The protein resides in the cell membrane. In terms of biological role, f(1)F(0) ATP synthase produces ATP from ADP in the presence of a proton or sodium gradient. F-type ATPases consist of two structural domains, F(1) containing the extramembraneous catalytic core and F(0) containing the membrane proton channel, linked together by a central stalk and a peripheral stalk. During catalysis, ATP synthesis in the catalytic domain of F(1) is coupled via a rotary mechanism of the central stalk subunits to proton translocation. Key component of the F(0) channel; it plays a direct role in translocation across the membrane. A homomeric c-ring of between 10-14 subunits forms the central stalk rotor element with the F(1) delta and epsilon subunits. The polypeptide is ATP synthase subunit c (Caldicellulosiruptor bescii (strain ATCC BAA-1888 / DSM 6725 / KCTC 15123 / Z-1320) (Anaerocellum thermophilum)).